Here is a 364-residue protein sequence, read N- to C-terminus: Phosphoserine aminotransferase (364 aa).

Arginine 41 serves as a coordination point for L-glutamate. Pyridoxal 5'-phosphate is bound by residues alanine 75 to serine 76, tryptophan 100, threonine 155, and glutamine 198. Lysine 199 carries the N6-(pyridoxal phosphate)lysine modification. Residue asparagine 239–threonine 240 coordinates pyridoxal 5'-phosphate.

Belongs to the class-V pyridoxal-phosphate-dependent aminotransferase family. SerC subfamily. As to quaternary structure, homodimer. The cofactor is pyridoxal 5'-phosphate.

It is found in the cytoplasm. The enzyme catalyses O-phospho-L-serine + 2-oxoglutarate = 3-phosphooxypyruvate + L-glutamate. The catalysed reaction is 4-(phosphooxy)-L-threonine + 2-oxoglutarate = (R)-3-hydroxy-2-oxo-4-phosphooxybutanoate + L-glutamate. The protein operates within amino-acid biosynthesis; L-serine biosynthesis; L-serine from 3-phospho-D-glycerate: step 2/3. In terms of biological role, catalyzes the reversible conversion of 3-phosphohydroxypyruvate to phosphoserine and of 3-hydroxy-2-oxo-4-phosphonooxybutanoate to phosphohydroxythreonine. The sequence is that of Phosphoserine aminotransferase from Streptococcus thermophilus (strain ATCC BAA-250 / LMG 18311).